The chain runs to 215 residues: Cytochrome b6 (215 aa).

A helical transmembrane segment spans residues 32 to 52 (IFYCLGGITLTCFLVQVATGF). Cys-35 contacts heme c. Positions 86 and 100 each coordinate heme b. Transmembrane regions (helical) follow at residues 90–110 (ASMM…TGGF), 116–136 (LTWV…VTGY), and 186–206 (LHTF…FLMI). Positions 187 and 202 each coordinate heme b.

This sequence belongs to the cytochrome b family. PetB subfamily. As to quaternary structure, the 4 large subunits of the cytochrome b6-f complex are cytochrome b6, subunit IV (17 kDa polypeptide, PetD), cytochrome f and the Rieske protein, while the 4 small subunits are PetG, PetL, PetM and PetN. The complex functions as a dimer. It depends on heme b as a cofactor. Requires heme c as cofactor.

Its subcellular location is the plastid. The protein localises to the chloroplast thylakoid membrane. Functionally, component of the cytochrome b6-f complex, which mediates electron transfer between photosystem II (PSII) and photosystem I (PSI), cyclic electron flow around PSI, and state transitions. The sequence is that of Cytochrome b6 from Huperzia lucidula (Shining clubmoss).